We begin with the raw amino-acid sequence, 278 residues long: Transcriptional regulator ICP22 homolog (278 aa).

2 disordered regions span residues 1 to 42 (MFCT…RDTS) and 154 to 229 (CDVS…KRPQ). Positions 1-142 (MFCTSPATRG…PRGEDGFIEA (142 aa)) are IE62-binding. Acidic residues-rich tracts occupy residues 155-169 (DVSD…DDDG) and 183-205 (AESS…DSCE).

Belongs to the herpesviridae ICP22 family. In terms of assembly, interacts with IE62; this interaction modulates the function of IE62. Interacts with several components of host pre-initiation complex including GTF2E1, GTF2H2 and POLR2A; these interactions lead to repression of gene transcription. Interacts with host ASF1A; altering its ability to bind histones. Post-translationally, phosphorylated in vitro by host and by protein kinase ORF47.

It is found in the host cytoplasm. The protein resides in the host nucleus. The protein localises to the virion tegument. In terms of biological role, immediate early (EI) protein that functions as a transcriptional regulator of cellular and viral mRNAs mainly by interacting with several general transcription factors thereby disorganizing the preinitiation complex at certain promoters. May additionally help to regulate levels of histones in virus-infected cells by interacting with host ASF1. By inhibiting host transcriptional program, IE63 plays a major role in the ability of VZV to overcome the innate immune response to the virus. The chain is Transcriptional regulator ICP22 homolog from Varicella-zoster virus (strain Dumas) (HHV-3).